The chain runs to 156 residues: 6,7-dimethyl-8-ribityllumazine synthase (156 aa).

5-amino-6-(D-ribitylamino)uracil contacts are provided by residues F22, 57–59 (AYE), and 81–83 (TVI). 86–87 (GT) provides a ligand contact to (2S)-2-hydroxy-3-oxobutyl phosphate. Catalysis depends on H89, which acts as the Proton donor. Residue F114 participates in 5-amino-6-(D-ribitylamino)uracil binding. R128 lines the (2S)-2-hydroxy-3-oxobutyl phosphate pocket.

The protein belongs to the DMRL synthase family. As to quaternary structure, forms an icosahedral capsid composed of 60 subunits, arranged as a dodecamer of pentamers.

The enzyme catalyses (2S)-2-hydroxy-3-oxobutyl phosphate + 5-amino-6-(D-ribitylamino)uracil = 6,7-dimethyl-8-(1-D-ribityl)lumazine + phosphate + 2 H2O + H(+). It participates in cofactor biosynthesis; riboflavin biosynthesis; riboflavin from 2-hydroxy-3-oxobutyl phosphate and 5-amino-6-(D-ribitylamino)uracil: step 1/2. Its function is as follows. Catalyzes the formation of 6,7-dimethyl-8-ribityllumazine by condensation of 5-amino-6-(D-ribitylamino)uracil with 3,4-dihydroxy-2-butanone 4-phosphate. This is the penultimate step in the biosynthesis of riboflavin. The polypeptide is 6,7-dimethyl-8-ribityllumazine synthase (Citrobacter koseri (strain ATCC BAA-895 / CDC 4225-83 / SGSC4696)).